We begin with the raw amino-acid sequence, 202 residues long: ATP-dependent Clp protease proteolytic subunit (202 aa).

Ser106 (nucleophile) is an active-site residue. His131 is a catalytic residue.

It belongs to the peptidase S14 family. Fourteen ClpP subunits assemble into 2 heptameric rings which stack back to back to give a disk-like structure with a central cavity, resembling the structure of eukaryotic proteasomes.

The protein localises to the cytoplasm. The enzyme catalyses Hydrolysis of proteins to small peptides in the presence of ATP and magnesium. alpha-casein is the usual test substrate. In the absence of ATP, only oligopeptides shorter than five residues are hydrolyzed (such as succinyl-Leu-Tyr-|-NHMec, and Leu-Tyr-Leu-|-Tyr-Trp, in which cleavage of the -Tyr-|-Leu- and -Tyr-|-Trp bonds also occurs).. Cleaves peptides in various proteins in a process that requires ATP hydrolysis. Has a chymotrypsin-like activity. Plays a major role in the degradation of misfolded proteins. The polypeptide is ATP-dependent Clp protease proteolytic subunit (Shewanella sp. (strain MR-7)).